Reading from the N-terminus, the 1755-residue chain is Transposon Ty1-OL Gag-Pol polyprotein (1755 aa).

Polar residues-rich tracts occupy residues 1–23 (MESQ…SVTS), 48–60 (TKAN…TPAS), and 127–152 (QSQF…GNTF). 3 disordered regions span residues 1 to 93 (MESQ…MMTQ), 126 to 173 (PQSQ…RPPP), and 352 to 421 (GSRN…SKST). Positions 153 to 165 (TDSSSADSDMTST) are enriched in low complexity. The RNA-binding stretch occupies residues 299–401 (NNGIHINNKV…NSKSKTARAH (103 aa)). Residues 402 to 418 (NVSTSNNSPSTDNDSIS) show a composition bias toward low complexity. Ser416 is subject to Phosphoserine. Residue Asp461 is the For protease activity; shared with dimeric partner of the active site. Residues 583–640 (NVHTSESTRKYPYPFIHRMLAHANAQTIRYSLKNNTITYFNESDVDWSSAIDYQCPDC) are integrase-type zinc finger-like. In terms of domain architecture, Integrase catalytic spans 660-835 (NSYEPFQYLH…AGLDISTLLP (176 aa)). Mg(2+) is bound by residues Asp671 and Asp736. Disordered stretches follow at residues 956 to 1087 (SKAV…ETEK), 1092 to 1111 (RSPS…NIVP), and 1130 to 1171 (DLPL…DSNA). Residues 960 to 969 (SPTDSTPPST) are compositionally biased toward low complexity. Over residues 1005–1015 (STPQISNIEST) the composition is skewed to polar residues. A compositionally biased stretch (basic and acidic residues) spans 1038 to 1053 (ESSHASKSKDFRHSDS). Composition is skewed to polar residues over residues 1054 to 1082 (YSEN…QISD) and 1101 to 1111 (PENNSSHNIVP). A Bipartite nuclear localization signal motif is present at residues 1178 to 1212 (KKRSLEDNETEIKVSRDTWNTKNMRSLEPPRSKKR). Residues 1338–1476 (NNYYITQLDI…DILGLEIKYQ (139 aa)) form the Reverse transcriptase Ty1/copia-type domain. Asp1346, Asp1427, Asp1428, Asp1610, Glu1652, and Asp1685 together coordinate Mg(2+). Positions 1610 to 1752 (DASYGNQPYY…IKTFKLLTNK (143 aa)) constitute an RNase H Ty1/copia-type domain.

The capsid protein forms a homotrimer, from which the VLPs are assembled. The protease is a homodimer, whose active site consists of two apposed aspartic acid residues. Post-translationally, initially, virus-like particles (VLPs) are composed of the structural unprocessed proteins Gag and Gag-Pol, and also contain the host initiator methionine tRNA (tRNA(i)-Met) which serves as a primer for minus-strand DNA synthesis, and a dimer of genomic Ty RNA. Processing of the polyproteins occurs within the particle and proceeds by an ordered pathway, called maturation. First, the protease (PR) is released by autocatalytic cleavage of the Gag-Pol polyprotein yielding capsid protein p45 and a Pol-p154 precursor protein. This cleavage is a prerequisite for subsequent processing of Pol-p154 at the remaining sites to release the mature structural and catalytic proteins. Maturation takes place prior to the RT reaction and is required to produce transposition-competent VLPs.

It is found in the cytoplasm. The protein localises to the nucleus. It catalyses the reaction DNA(n) + a 2'-deoxyribonucleoside 5'-triphosphate = DNA(n+1) + diphosphate. The enzyme catalyses Endonucleolytic cleavage to 5'-phosphomonoester.. Its function is as follows. Capsid protein (CA) is the structural component of the virus-like particle (VLP), forming the shell that encapsulates the retrotransposons dimeric RNA genome. The particles are assembled from trimer-clustered units and there are holes in the capsid shells that allow for the diffusion of macromolecules. CA also has nucleocapsid-like chaperone activity, promoting primer tRNA(i)-Met annealing to the multipartite primer-binding site (PBS), dimerization of Ty1 RNA and initiation of reverse transcription. The aspartyl protease (PR) mediates the proteolytic cleavages of the Gag and Gag-Pol polyproteins after assembly of the VLP. Functionally, reverse transcriptase/ribonuclease H (RT) is a multifunctional enzyme that catalyzes the conversion of the retro-elements RNA genome into dsDNA within the VLP. The enzyme displays a DNA polymerase activity that can copy either DNA or RNA templates, and a ribonuclease H (RNase H) activity that cleaves the RNA strand of RNA-DNA heteroduplexes during plus-strand synthesis and hydrolyzes RNA primers. The conversion leads to a linear dsDNA copy of the retrotransposon that includes long terminal repeats (LTRs) at both ends. In terms of biological role, integrase (IN) targets the VLP to the nucleus, where a subparticle preintegration complex (PIC) containing at least integrase and the newly synthesized dsDNA copy of the retrotransposon must transit the nuclear membrane. Once in the nucleus, integrase performs the integration of the dsDNA into the host genome. This is Transposon Ty1-OL Gag-Pol polyprotein (TY1B-OL) from Saccharomyces cerevisiae (strain ATCC 204508 / S288c) (Baker's yeast).